We begin with the raw amino-acid sequence, 239 residues long: Serine protease SplD (239 aa).

The signal sequence occupies residues 1–36; that stretch reads MNKNIIIKSIAALTILTSITGVGTTVVDGIQQTAKA. Active-site charge relay system residues include histidine 75, aspartate 114, and serine 192.

Belongs to the peptidase S1B family.

It is found in the secreted. This Staphylococcus aureus (strain Mu3 / ATCC 700698) protein is Serine protease SplD (splD).